The primary structure comprises 31 residues: Cytochrome b6-f complex subunit 6 (31 aa).

The helical transmembrane segment at 4-24 threads the bilayer; sequence VISYFGFLLVALAFTLVTYLG.

The protein belongs to the PetL family. In terms of assembly, the 4 large subunits of the cytochrome b6-f complex are cytochrome b6, subunit IV (17 kDa polypeptide, PetD), cytochrome f and the Rieske protein, while the 4 small subunits are PetG, PetL, PetM and PetN. The complex functions as a dimer.

The protein resides in the plastid. It is found in the chloroplast thylakoid membrane. In terms of biological role, component of the cytochrome b6-f complex, which mediates electron transfer between photosystem II (PSII) and photosystem I (PSI), cyclic electron flow around PSI, and state transitions. PetL is important for photoautotrophic growth as well as for electron transfer efficiency and stability of the cytochrome b6-f complex. The protein is Cytochrome b6-f complex subunit 6 of Nephroselmis olivacea (Green alga).